Consider the following 284-residue polypeptide: Undecaprenyl-diphosphatase (284 aa).

The next 8 membrane-spanning stretches (helical) occupy residues 7 to 27 (IILGIIEGITEWLPISSTGHL), 44 to 64 (EMFDVVIQLGAILSVVVLYFH), 90 to 110 (LWLKVLIAALPAAIIGLPLND), 116 to 136 (FYHFVPVAFMLIIYGVAFIVI), 167 to 187 (VLSLLPGTSRSGATIVGALLI), 197 to 217 (FTFFLGIPVMFGASFIKILHF), 229 to 249 (FGVLLVACLVAFGVSMIAIKF), and 259 to 279 (FTFFGKYRIVLGIVLLIYAAF).

Belongs to the UppP family.

It is found in the cell membrane. It catalyses the reaction di-trans,octa-cis-undecaprenyl diphosphate + H2O = di-trans,octa-cis-undecaprenyl phosphate + phosphate + H(+). Its function is as follows. Catalyzes the dephosphorylation of undecaprenyl diphosphate (UPP). Confers resistance to bacitracin. The chain is Undecaprenyl-diphosphatase from Lactococcus lactis subsp. cremoris (strain SK11).